Reading from the N-terminus, the 272-residue chain is Putative MgpC-like protein MPN_366 (272 aa).

Disordered regions lie at residues 65–84 (QESQ…TSGS) and 171–196 (GSGQ…PMPS). Low complexity predominate over residues 72–84 (NGSQSGSSDTSGS). The span at 173–187 (GQESSWNSQRSQKGL) shows a compositional bias: polar residues.

It belongs to the MgpC family.

This is Putative MgpC-like protein MPN_366 from Mycoplasma pneumoniae (strain ATCC 29342 / M129 / Subtype 1) (Mycoplasmoides pneumoniae).